Here is a 94-residue protein sequence, read N- to C-terminus: Ferredoxin-like protein (94 aa).

4Fe-4S ferredoxin-type domains lie at 20–52 and 53–83; these read PHIRIKDPDHCTELSEKQCTVCCPAGCYTRETN and GKVTLVTDGCLECGTCRIICQDSGNLEWEWP.

This sequence to ferredoxins from P.putida and C.tartarivorum, ferredoxin I from A.vinelandii, ferredoxin II from D.desulfuricans.

Functionally, could be a 3Fe-4S cluster-containing protein. The sequence is that of Ferredoxin-like protein (fixX) from Azotobacter vinelandii.